A 123-amino-acid polypeptide reads, in one-letter code: Amoebiasin-2 (123 aa).

The signal sequence occupies residues M1–A16. The BC loop motif lies at N45–Y50. The short motif at E71–P81 is the DE loop element. Positions P105–R114 match the FG loop motif.

This sequence belongs to the protease inhibitor I42 family. Monomer. May form homodimer. Interacts with cysteine protease CP2. Interacts with cysteine protease CP5.

Its subcellular location is the cytoplasmic vesicle. The protein resides in the lysosome. It is found in the phagosome. In terms of biological role, cysteine protease inhibitor. Inhibits cysteine proteases CP1, CP2 and to a lesser extent CP5. This chain is Amoebiasin-2, found in Entamoeba histolytica (strain ATCC 30459 / HM-1:IMSS / ABRM).